The sequence spans 397 residues: Succinate--CoA ligase [ADP-forming] subunit beta (397 aa).

The ATP-grasp domain maps to 9-254 (KALLKSFGAP…KSEEDEKEIQ (246 aa)). Residues Lys-46, 53–55 (GRG), Glu-109, Ala-112, and Glu-117 each bind ATP. Mg(2+) is bound by residues Asn-209 and Asp-223. Substrate-binding positions include Asn-274 and 331–333 (GIM).

The protein belongs to the succinate/malate CoA ligase beta subunit family. In terms of assembly, heterotetramer of two alpha and two beta subunits. It depends on Mg(2+) as a cofactor.

It catalyses the reaction succinate + ATP + CoA = succinyl-CoA + ADP + phosphate. The catalysed reaction is GTP + succinate + CoA = succinyl-CoA + GDP + phosphate. It participates in carbohydrate metabolism; tricarboxylic acid cycle; succinate from succinyl-CoA (ligase route): step 1/1. Succinyl-CoA synthetase functions in the citric acid cycle (TCA), coupling the hydrolysis of succinyl-CoA to the synthesis of either ATP or GTP and thus represents the only step of substrate-level phosphorylation in the TCA. The beta subunit provides nucleotide specificity of the enzyme and binds the substrate succinate, while the binding sites for coenzyme A and phosphate are found in the alpha subunit. The polypeptide is Succinate--CoA ligase [ADP-forming] subunit beta (Rhizobium rhizogenes (strain K84 / ATCC BAA-868) (Agrobacterium radiobacter)).